Consider the following 125-residue polypeptide: Histone H2A (125 aa).

Positions 1–18 are enriched in basic residues; the sequence is MSGRGKGGKARAKAKSRS. Positions 1 to 21 are disordered; it reads MSGRGKGGKARAKAKSRSSRA. An N-acetylserine modification is found at S2. Residue S2 is modified to Phosphoserine. Q104 carries the post-translational modification N5-methylglutamine.

Belongs to the histone H2A family. As to quaternary structure, the nucleosome is a histone octamer containing two molecules each of H2A, H2B, H3 and H4 assembled in one H3-H4 heterotetramer and two H2A-H2B heterodimers. The octamer wraps approximately 147 bp of DNA.

The protein resides in the nucleus. Its subcellular location is the chromosome. Core component of nucleosome. Nucleosomes wrap and compact DNA into chromatin, limiting DNA accessibility to the cellular machineries which require DNA as a template. Histones thereby play a central role in transcription regulation, DNA repair, DNA replication and chromosomal stability. DNA accessibility is regulated via a complex set of post-translational modifications of histones, also called histone code, and nucleosome remodeling. This is Histone H2A from Asterias rubens (Common European starfish).